A 294-amino-acid polypeptide reads, in one-letter code: Nucleoside-specific channel-forming protein Tsx (294 aa).

An N-terminal signal peptide occupies residues 1–22 (MKKTLLAASAVVALSASFTAGA).

The protein belongs to the nucleoside-specific channel-forming outer membrane porin (Tsx) (TC 1.B.10) family.

It is found in the cell outer membrane. Its function is as follows. Functions as a substrate-specific channel for nucleosides and deoxynucleosides. Also functions in albicidin uptake and as receptor for colicin K. Also is a receptor for several Tsx-specific bacteriophages. This Klebsiella aerogenes (strain ATCC 13048 / DSM 30053 / CCUG 1429 / JCM 1235 / KCTC 2190 / NBRC 13534 / NCIMB 10102 / NCTC 10006 / CDC 819-56) (Enterobacter aerogenes) protein is Nucleoside-specific channel-forming protein Tsx.